Here is a 21-residue protein sequence, read N- to C-terminus: IIGGVESRPHSRPYMATLEIT.

One can recognise a Peptidase S1 domain in the interval 1–21 (IIGGVESRPHSRPYMATLEIT). The interval 1–21 (IIGGVESRPHSRPYMATLEIT) is disordered.

It belongs to the peptidase S1 family. Granzyme subfamily.

Its function is as follows. Thrombin inactivating protease. Displays chymotrypsin-like substrate specificity. This chain is Mast cell protease 3 (Mcpt3), found in Mus musculus (Mouse).